The chain runs to 154 residues: MAARLCCQLDPTRDVLCLRPVGAESRGRPVSGPLGDLPSPSASPVPTIDRAHLSLRGLPVCAFSSAGPCALRFTSARRMETTVNTHMILPKVLHKRTLGLPAMSTIDLEAYFKDCLFKDWEELGEEIRLKVFVLGGCRHKLVCSPAPCNFFTSA.

The mitochondrial targeting sequence stretch occupies residues 68–117; the sequence is PCALRFTSARRMETTVNTHMILPKVLHKRTLGLPAMSTIDLEAYFKDCLF.

It belongs to the orthohepadnavirus protein X family. May form homodimer. May interact with host CEBPA, CFLAR, CREB1, DDB1, E4F1, HBXIP, HSPD1/HSP60, NFKBIA, POLR2E and SMAD4. Interacts with host SMC5-SMC6 complex and induces its degradation. Interacts with host TRPC4AP; leading to prevent ubiquitination of TRPC4AP. Interacts with host PLSCR1; this interaction promotes ubiquitination and degradation of HBx and impairs HBx-mediated cell proliferation. In terms of processing, a fraction may be phosphorylated in insect cells and HepG2 cells, a human hepatoblastoma cell line. Phosphorylated in vitro by host protein kinase C or mitogen-activated protein kinase. N-acetylated in insect cells.

Its subcellular location is the host cytoplasm. It is found in the host nucleus. It localises to the host mitochondrion. Multifunctional protein that plays a role in silencing host antiviral defenses and promoting viral transcription. Does not seem to be essential for HBV infection. May be directly involved in development of cirrhosis and liver cancer (hepatocellular carcinoma). Most of cytosolic activities involve modulation of cytosolic calcium. The effect on apoptosis is controversial depending on the cell types in which the studies have been conducted. May induce apoptosis by localizing in mitochondria and causing loss of mitochondrial membrane potential. May also modulate apoptosis by binding host CFLAR, a key regulator of the death-inducing signaling complex (DISC). Promotes viral transcription by using the host E3 ubiquitin ligase DDB1 to target the SMC5-SMC6 complex to proteasomal degradation. This host complex would otherwise bind to viral episomal DNA, and prevents its transcription. Moderately stimulates transcription of many different viral and cellular transcription elements. Promoters and enhancers stimulated by HBx contain DNA binding sites for NF-kappa-B, AP-1, AP-2, c-EBP, ATF/CREB, or the calcium-activated factor NF-AT. The sequence is that of Protein X from Hepatitis B virus genotype C subtype ayw (isolate Australia/AustRC/1992) (HBV-C).